The sequence spans 333 residues: MLCRLGGRWLRPLPALQLWARDLPLAPVPTSGAKRPTLPVWAVAPVSAVHANGWYEALAASSPVRVAEEVLLGVHAATGLPWWGSILLSTVALRGAVTLPLAAYQHYILAKVENLQPEIKTIARHLNQEVAVRANQLGWSKRDARLTYLKNMRRLISELYVRDNCHPFKATVLVWIQLPMWIFMSFALRNLSTGAAHSEGFSVQEQLATGGILWFPDLTAPDSTWILPISVGVINLLIVEICALQKIGMSRFQTYITYFVRAMSVLMIPIAATVPSSIVLYWLCSSFVGLSQNLLLRSPGFRQLCRIPSTKSDSETPYKDIFAAFNTKFISRK.

Residues 168–188 (FKATVLVWIQLPMWIFMSFAL) traverse the membrane as a helical segment. Residues 189–223 (RNLSTGAAHSEGFSVQEQLATGGILWFPDLTAPDS) lie on the Mitochondrial matrix side of the membrane. The chain crosses the membrane as a helical span at residues 224–244 (TWILPISVGVINLLIVEICAL). The Mitochondrial intermembrane segment spans residues 245–262 (QKIGMSRFQTYITYFVRA). A helical transmembrane segment spans residues 263–283 (MSVLMIPIAATVPSSIVLYWL). Topologically, residues 284–333 (CSSFVGLSQNLLLRSPGFRQLCRIPSTKSDSETPYKDIFAAFNTKFISRK) are mitochondrial matrix.

This sequence belongs to the OXA1/ALB3/YidC family. Found in a complex with TMEM177, COA6, MT-CO2/COX2, COX20, SCO1 and SCO2. Interacts transiently with MT-CO2/COX2 during its maturation. Interacts with COX20 in a MT-CO2/COX2-dependent manner.

It is found in the mitochondrion inner membrane. Its function is as follows. Mitochondrial membrane insertase required for the translocation of the C-terminus of cytochrome c oxidase subunit II (MT-CO2/COX2) across the mitochondrial inner membrane. Plays a role in MT-CO2/COX2 maturation following the COX20-mediated stabilization of newly synthesized MT-CO2/COX2 protein and before the action of the metallochaperones SCO1/2. Essential for the assembly and stability of the mitochondrial respiratory chain complex IV (also known as cytochrome c oxidase). The polypeptide is Cytochrome c oxidase assembly protein COX18, mitochondrial (COX18) (Homo sapiens (Human)).